A 537-amino-acid polypeptide reads, in one-letter code: CTP synthase (537 aa).

Positions 1–268 (MSTKYIFVTG…DQIVCDHLKL (268 aa)) are amidoligase domain. Ser14 provides a ligand contact to CTP. Residue Ser14 participates in UTP binding. 15–20 (SIGKGI) serves as a coordination point for ATP. Tyr55 serves as a coordination point for L-glutamine. Asp72 is an ATP binding site. The Mg(2+) site is built by Asp72 and Glu142. Residues 149-151 (DIE), 189-194 (KTKPTQ), and Lys225 contribute to the CTP site. UTP-binding positions include 189-194 (KTKPTQ) and Lys225. The region spanning 293-536 (RIALVGKYVE…VTAAVEKSSD (244 aa)) is the Glutamine amidotransferase type-1 domain. L-glutamine is bound at residue Gly355. The active-site Nucleophile; for glutamine hydrolysis is the Cys382. L-glutamine contacts are provided by residues 383–386 (LGMQ), Glu406, and Arg464. Catalysis depends on residues His509 and Glu511.

It belongs to the CTP synthase family. In terms of assembly, homotetramer.

It catalyses the reaction UTP + L-glutamine + ATP + H2O = CTP + L-glutamate + ADP + phosphate + 2 H(+). The catalysed reaction is L-glutamine + H2O = L-glutamate + NH4(+). The enzyme catalyses UTP + NH4(+) + ATP = CTP + ADP + phosphate + 2 H(+). The protein operates within pyrimidine metabolism; CTP biosynthesis via de novo pathway; CTP from UDP: step 2/2. Allosterically activated by GTP, when glutamine is the substrate; GTP has no effect on the reaction when ammonia is the substrate. The allosteric effector GTP functions by stabilizing the protein conformation that binds the tetrahedral intermediate(s) formed during glutamine hydrolysis. Inhibited by the product CTP, via allosteric rather than competitive inhibition. Its function is as follows. Catalyzes the ATP-dependent amination of UTP to CTP with either L-glutamine or ammonia as the source of nitrogen. Regulates intracellular CTP levels through interactions with the four ribonucleotide triphosphates. The chain is CTP synthase from Streptococcus sanguinis (strain SK36).